The sequence spans 418 residues: Serine hydroxymethyltransferase (418 aa).

(6S)-5,6,7,8-tetrahydrofolate is bound by residues L120 and 124–126 (GHL). Position 229 is an N6-(pyridoxal phosphate)lysine (K229). (6S)-5,6,7,8-tetrahydrofolate is bound at residue 353-355 (SPF).

The protein belongs to the SHMT family. In terms of assembly, homodimer. Pyridoxal 5'-phosphate is required as a cofactor.

It localises to the cytoplasm. It carries out the reaction (6R)-5,10-methylene-5,6,7,8-tetrahydrofolate + glycine + H2O = (6S)-5,6,7,8-tetrahydrofolate + L-serine. It functions in the pathway one-carbon metabolism; tetrahydrofolate interconversion. It participates in amino-acid biosynthesis; glycine biosynthesis; glycine from L-serine: step 1/1. Functionally, catalyzes the reversible interconversion of serine and glycine with tetrahydrofolate (THF) serving as the one-carbon carrier. This reaction serves as the major source of one-carbon groups required for the biosynthesis of purines, thymidylate, methionine, and other important biomolecules. Also exhibits THF-independent aldolase activity toward beta-hydroxyamino acids, producing glycine and aldehydes, via a retro-aldol mechanism. This chain is Serine hydroxymethyltransferase, found in Psychrobacter arcticus (strain DSM 17307 / VKM B-2377 / 273-4).